A 53-amino-acid polypeptide reads, in one-letter code: ATP synthase F(0) complex subunit 8 (53 aa).

The chain crosses the membrane as a helical span at residues 8-24; sequence PWLTTFLIVWISLIVIL.

This sequence belongs to the ATPase protein 8 family. As to quaternary structure, component of the ATP synthase complex composed at least of ATP5F1A/subunit alpha, ATP5F1B/subunit beta, ATP5MC1/subunit c (homooctomer), MT-ATP6/subunit a, MT-ATP8/subunit 8, ATP5ME/subunit e, ATP5MF/subunit f, ATP5MG/subunit g, ATP5MK/subunit k, ATP5MJ/subunit j, ATP5F1C/subunit gamma, ATP5F1D/subunit delta, ATP5F1E/subunit epsilon, ATP5PF/subunit F6, ATP5PB/subunit b, ATP5PD/subunit d, ATP5PO/subunit OSCP. ATP synthase complex consists of a soluble F(1) head domain (subunits alpha(3) and beta(3)) - the catalytic core - and a membrane F(0) domain - the membrane proton channel (subunits c, a, 8, e, f, g, k and j). These two domains are linked by a central stalk (subunits gamma, delta, and epsilon) rotating inside the F1 region and a stationary peripheral stalk (subunits F6, b, d, and OSCP).

It is found in the mitochondrion membrane. Subunit 8, of the mitochondrial membrane ATP synthase complex (F(1)F(0) ATP synthase or Complex V) that produces ATP from ADP in the presence of a proton gradient across the membrane which is generated by electron transport complexes of the respiratory chain. ATP synthase complex consist of a soluble F(1) head domain - the catalytic core - and a membrane F(1) domain - the membrane proton channel. These two domains are linked by a central stalk rotating inside the F(1) region and a stationary peripheral stalk. During catalysis, ATP synthesis in the catalytic domain of F(1) is coupled via a rotary mechanism of the central stalk subunits to proton translocation. In vivo, can only synthesize ATP although its ATP hydrolase activity can be activated artificially in vitro. Part of the complex F(0) domain. This chain is ATP synthase F(0) complex subunit 8, found in Alligator mississippiensis (American alligator).